The following is a 201-amino-acid chain: Phospholipase A2 inhibitor PIP (201 aa).

Positions 1–19 (MKSLQTICLLFIFIARGTS) are cleaved as a signal peptide. Disulfide bonds link Cys22-Cys46, Cys25-Cys32, Cys39-Cys67, Cys73-Cys94, Cys95-Cys100, Cys118-Cys143, Cys136-Cys165, and Cys169-Cys191. A glycan (N-linked (GlcNAc...) asparagine) is linked at Asn157.

In terms of assembly, homohexamer. In terms of processing, glycosylated. As to expression, expressed by the liver.

The protein resides in the secreted. In terms of biological role, inhibits the enzymatic activity of phospholipase A2 (PA2). Binds to the major PLA2 toxin of D.russelli siamensis (Daboiatoxin, AC Q7T2R1, and AC Q7T3T5) at 1-2-fold molar excess of inhibitor to toxin. It exhibits broad spectra in neutralizing the toxicity of various snake venoms and toxins and inhibits the formation of edema in mice. May bind to PLA2 through its proline-rich hydrophobic core region. The chain is Phospholipase A2 inhibitor PIP from Malayopython reticulatus (Reticulate python).